The chain runs to 867 residues: Armadillo repeat-containing protein 2 (867 aa).

Disordered stretches follow at residues 1–115 (MLSP…CFSF) and 214–252 (TSLPSHLKNGGDQGKRHARASSCPSSSDLSRLQTKAVPK). Polar residues-rich tracts occupy residues 18-28 (PSVSKQKTSAE), 40-50 (VRTQRPFTPQE), and 60-69 (SSRTSENRPP). Composition is skewed to low complexity over residues 70-81 (SSFSLHASSFES) and 234-243 (SSCPSSSDLS). ARM repeat units lie at residues 262–301 (IEVDEVFWNTRIVPILRELEKEENIETVCAACTQLHHALE), 304–344 (NMLG…ALKV), 363–403 (EKND…SIKF), 408–449 (LGFL…HLLV), 462–503 (SLVR…KLTS), 506–547 (DCCT…NLTA), 551–589 (QAREQFSKEKGSIQTLLSLFQTFHQLDLHSQKPVGQRGE), 591–616 (HRAQRPPSEAEDVLIKLTRVLANIAI), 619–662 (GVGP…NLSY), 664–705 (QVKN…NLSQ), 707–746 (HDVCDFIVQNNVHRFMMALLDAQHQDICFSACGVLLNLTV), and 748–790 (KDKR…NFSE).

In terms of tissue distribution, expressed at higher level in testis.

Functionally, required for sperm flagellum axoneme organization and function. Involved in axonemal central pair complex assembly and/or stability. The polypeptide is Armadillo repeat-containing protein 2 (Homo sapiens (Human)).